The primary structure comprises 270 residues: MENPVIIYVISDAIGETAQHIIRAVTAQFSLNKPADIRRHAFIRDESALLETLEEAKAADGIVVQTLVQAKLAEYATNFCVQNNIPNVDLLHTLTAAVEAKTGLKSKQDPGNMRRLDSNYFDRIAAIEFAVKYDDCKDPRGLLDADIVLVGVSRTSKTPLSSFLANQNWKVANVPLVPEIPIPAELFQIPAERIIGLTTTPEKLAQIRKVRLKSIGLDEASSYSSEKRILEELEYGYDTFKKLGCQVIHVEDKAIEETAALITEIITSYH.

Position 151–158 (151–158) interacts with ADP; it reads GVSRTSKT.

It belongs to the pyruvate, phosphate/water dikinase regulatory protein family. PDRP subfamily.

It carries out the reaction N(tele)-phospho-L-histidyl/L-threonyl-[pyruvate, phosphate dikinase] + ADP = N(tele)-phospho-L-histidyl/O-phospho-L-threonyl-[pyruvate, phosphate dikinase] + AMP + H(+). The catalysed reaction is N(tele)-phospho-L-histidyl/O-phospho-L-threonyl-[pyruvate, phosphate dikinase] + phosphate + H(+) = N(tele)-phospho-L-histidyl/L-threonyl-[pyruvate, phosphate dikinase] + diphosphate. Bifunctional serine/threonine kinase and phosphorylase involved in the regulation of the pyruvate, phosphate dikinase (PPDK) by catalyzing its phosphorylation/dephosphorylation. The protein is Putative pyruvate, phosphate dikinase regulatory protein 2 of Listeria monocytogenes serotype 4b (strain F2365).